The chain runs to 135 residues: UPF0299 membrane protein PC1_1498 (135 aa).

Transmembrane regions (helical) follow at residues 5–25 (FIVC…LLAG), 30–50 (ALLP…FTLL), 63–83 (GCHL…VGVM), and 93–113 (FGPI…VVGF).

Belongs to the UPF0299 family.

Its subcellular location is the cell inner membrane. This Pectobacterium carotovorum subsp. carotovorum (strain PC1) protein is UPF0299 membrane protein PC1_1498.